The sequence spans 132 residues: Small ribosomal subunit protein uS11 (132 aa).

It belongs to the universal ribosomal protein uS11 family. In terms of assembly, part of the 30S ribosomal subunit.

In terms of biological role, located on the platform of the 30S subunit. This is Small ribosomal subunit protein uS11 from Saccharolobus solfataricus (strain ATCC 35092 / DSM 1617 / JCM 11322 / P2) (Sulfolobus solfataricus).